Consider the following 5289-residue polypeptide: Mucin-2 (5289 aa).

The signal sequence occupies residues 1–20; sequence MGLPLARLAAVCLALSLAGG. Serine 21 is modified (phosphoserine). Histidine 34 serves as a coordination point for Cu(2+). The VWFD 1 domain maps to 35–207; that stretch reads NVCSTWGNFH…KINQPDVVCE (173 aa). Disulfide bonds link cysteine 37–cysteine 169, cysteine 59–cysteine 206, cysteine 67–cysteine 166, cysteine 218–cysteine 255, cysteine 225–cysteine 250, cysteine 237–cysteine 275, cysteine 257–cysteine 263, cysteine 265–cysteine 291, cysteine 295–cysteine 329, cysteine 308–cysteine 321, cysteine 312–cysteine 351, cysteine 331–cysteine 345, cysteine 353–cysteine 375, cysteine 370–cysteine 387, cysteine 373–cysteine 382, cysteine 391–cysteine 528, cysteine 413–cysteine 563, cysteine 435–cysteine 443, cysteine 574–cysteine 619, cysteine 588–cysteine 614, cysteine 601–cysteine 639, cysteine 621–cysteine 627, cysteine 629–cysteine 654, cysteine 661–cysteine 698, cysteine 674–cysteine 688, cysteine 678–cysteine 718, cysteine 700–cysteine 712, cysteine 720–cysteine 742, and cysteine 740–cysteine 749. Aspartate 49 is a binding site for Ca(2+). Cu(+) is bound by residues methionine 146 and methionine 154. Glutamate 156 is a Cu(2+) binding site. Residue asparagine 163 is glycosylated (N-linked (GlcNAc...) asparagine). Positions 171, 173, 175, and 180 each coordinate Ca(2+). Histidine 277 contacts Cu(2+). The 57-residue stretch at 295-351 folds into the TIL domain; that stretch reads CPGNLVYLESGSPCMDTCSHLEVSSLCEEHRMDGCFCPEGTVYDDIGDSGCVPVSQC. A Cu(2+)-binding site is contributed by histidine 324. Residue methionine 326 participates in Cu(+) binding. The region spanning 389 to 564 is the VWFD 2 domain; that stretch reads GTCALEGGSH…NTWKAQSSCH (176 aa). Aspartate 403 provides a ligand contact to Ca(2+). N-linked (GlcNAc...) asparagine glycosylation occurs at asparagine 423. Ca(2+)-binding residues include asparagine 530, asparagine 532, leucine 534, aspartate 537, and aspartate 538. Asparagine 670 carries N-linked (GlcNAc...) asparagine glycosylation. Asparagine 770 carries an N-linked (GlcNAc...) asparagine glycan. 21 disulfides stabilise this stretch: cysteine 784-cysteine 820, cysteine 802-cysteine 814, cysteine 822-cysteine 844, cysteine 839-cysteine 856, cysteine 842-cysteine 851, cysteine 860-cysteine 992, cysteine 882-cysteine 1027, cysteine 891-cysteine 989, cysteine 909-cysteine 916, cysteine 1037-cysteine 1080, cysteine 1051-cysteine 1075, cysteine 1062-cysteine 1102, cysteine 1082-cysteine 1090, cysteine 1092-cysteine 1117, cysteine 1108-cysteine 1137, cysteine 1121-cysteine 1163, cysteine 1145-cysteine 1187, cysteine 1167-cysteine 1181, cysteine 1189-cysteine 1213, cysteine 1208-cysteine 1238, and cysteine 1211-cysteine 1221. The 171-residue stretch at 858 to 1028 folds into the VWFD 3 domain; the sequence is GTCSIYGSGH…NSWKEAPTCP (171 aa). Aspartate 872 provides a ligand contact to Ca(2+). Asparagine 894 carries an N-linked (GlcNAc...) asparagine glycan. Ca(2+) contacts are provided by asparagine 994, aspartate 996, arginine 998, asparagine 1001, and aspartate 1002. 2 N-linked (GlcNAc...) asparagine glycosylation sites follow: asparagine 1139 and asparagine 1154. Residues asparagine 1215, asparagine 1230, and asparagine 1246 are each glycosylated (N-linked (GlcNAc...) asparagine). Residues threonine 1266, threonine 1267, threonine 1269, threonine 1270, threonine 1272, threonine 1275, threonine 1276, threonine 1281, threonine 1282, and threonine 1287 are each glycosylated (O-linked (GalNAc) threonine). 2 O-linked (GalNAc) serine glycosylation sites follow: serine 1291 and serine 1292. O-linked (GalNAc) threonine glycosylation occurs at threonine 1293. The O-linked (GalNAc) serine glycan is linked to serine 1296. Threonine 1297 carries O-linked (GalNAc) threonine glycosylation. Ca(2+)-binding residues include asparagine 1310, aspartate 1312, histidine 1313, serine 1316, aspartate 1319, glycine 1321, aspartate 1322, glutamate 1324, aspartate 1381, and tyrosine 1382. 5 stretches are compositionally biased toward pro residues: residues 1399-1411, 1419-1510, 1520-1549, 1559-1628, and 1638-1679; these read PSPP…PPPT, TTTP…PITP, and TTTP…PPTT. The interval 1399–1773 is disordered; the sequence is PSPPTTTPSP…SITPPTFSPF (375 aa). 6 consecutive repeat copies span residues 1401–1416, 1417–1432, 1433–1448, 1449–1464, 1465–1471, and 1472–1478. The tract at residues 1401-1747 is approximate repeats; it reads PPTTTPSPPP…SPPTTTMTTL (347 aa). The stretch at 1479 to 1494 is one 7A repeat; that stretch reads PPTTTPSPPTTTTTTP. A 7B repeat occupies 1495–1517; it reads PPTTTPSPPTTTPITPPASTTTL. The stretch at 1518 to 1533 is one 8A repeat; the sequence is PPTTTPSPPTTTTTTP. Residues 1534–1556 form an 8B repeat; sequence PPTTTPSPPTTTPITPPTSTTTL. The stretch at 1557 to 1572 is one 9A repeat; sequence PPTTTPSPPPTTTTTP. The 9B repeat unit spans residues 1573-1596; it reads PPTTTPSPPTTTTPSPPTITTTTP. The stretch at 1597–1612 is one 10A repeat; it reads PPTTTPSPPTTTTTTP. The 10B repeat unit spans residues 1613–1635; sequence PPTTTPSPPTTTPITPPTSTTTL. An 11A repeat occupies 1636–1651; that stretch reads PPTTTPSPPPTTTTTP. The 11B repeat unit spans residues 1652-1675; the sequence is PPTTTPSPPTTTTPSPPITTTTTP. A run of 5 repeats spans residues 1676–1683, 1684–1699, 1700–1715, 1716–1731, and 1732–1747. Low complexity-rich tracts occupy residues 1680 to 1720 and 1741 to 1759; these read TPSS…STTT and TTTM…LTTT. The span at 1760–1770 shows a compositional bias: pro residues; sequence PLPPSITPPTF. Asparagine 1787 and asparagine 1820 each carry an N-linked (GlcNAc...) asparagine glycan. 4 stretches are compositionally biased toward low complexity: residues 1885 to 2158, 2165 to 4238, 4269 to 4315, and 4329 to 4430; these read MTTT…TMVT, GTQT…QTPT, TTVT…STAP, and STPQ…PSII. Disordered stretches follow at residues 1885-4238 and 4269-4430; these read MTTT…QTPT and TTVT…PSII. N-linked (GlcNAc...) asparagine glycosylation is found at asparagine 4449, asparagine 4461, asparagine 4472, and asparagine 4483. Residues 4492–4524 form a disordered region; it reads PTPTPSKSTPTPSKPSSTPSKPTPGTKPPECPD. Low complexity predominate over residues 4496–4511; the sequence is PSKSTPTPSKPSSTPS. A compositionally biased stretch (pro residues) spans 4512–4522; that stretch reads KPTPGTKPPEC. N-linked (GlcNAc...) asparagine glycans are attached at residues asparagine 4532, asparagine 4548, and asparagine 4612. Residues 4589-4772 enclose the VWFD 4 domain; that stretch reads CYCTGWGDPH…VNDPSKPHCP (184 aa). Intrachain disulfides connect cysteine 4591–cysteine 4732, cysteine 4613–cysteine 4771, and cysteine 4637–cysteine 4645. N-linked (GlcNAc...) asparagine glycans are attached at residues asparagine 4726 and asparagine 4737. Positions 4770–4795 are disordered; it reads HCPHSSSTTKRPAVTVPGGGKTTPHK. Asparagine 4862, asparagine 4897, asparagine 4991, asparagine 4998, asparagine 5065, asparagine 5080, asparagine 5129, asparagine 5148, and asparagine 5179 each carry an N-linked (GlcNAc...) asparagine glycan. The region spanning 4927-4996 is the VWFC 1 domain; the sequence is CVGPDNVPRE…DTCCNITVCK (70 aa). The region spanning 5034-5101 is the VWFC 2 domain; it reads GVCVHGNAEY…APGECCKKCE (68 aa). 4 disulfide bridges follow: cysteine 5185–cysteine 5232, cysteine 5199–cysteine 5246, cysteine 5208–cysteine 5262, and cysteine 5212–cysteine 5264. A CTCK domain is found at 5185–5270; it reads CSTVPVTTEV…SCQCQDTVCG (86 aa).

As to quaternary structure, homomultimer; disulfide-linked. The N- and C-terminus mediate their assembly into higher order structures to form filaments. The CTCK domains of two polypeptides associate in the endoplasmic reticulum to generate intermolecularly disulfide-bonded dimers. These dimers progress to the Golgi apparatus, which is a more acidic environment than the endoplasmic reticulum. Under acidic conditions, the N-termini form non-covalent intermolecular interactions that juxtapose assemblies of the third VWD domain (VWD3) from different CTCK-linked dimers. The VWD3 assemblies then become disulfide bonded to one another to produce long, disulfide-linked polymers that remain highly compact until secretion. Interacts with FCGBP. Interacts with AGR2; disulfide-linked. In terms of assembly, (Microbial infection) Interacts in vitro with L.monocytogenes internalin proteins InlB, InlC and InlJ; for InlC binding is slightly better at pH 5.5, (the pH of the intestine) than at pH 7.4. O-glycosylated. O-glycosylation is required for mucin assembly. Goblet cells synthesize two forms of mucin that differ in branched chain O-glycosylation and the site of production in the colon. In terms of processing, may undergo proteolytic cleavage in the outer mucus layer of the colon, contributing to the expanded volume and loose nature of this layer which allows for bacterial colonization in contrast to the inner mucus layer which is dense and devoid of bacteria. Post-translationally, at low pH of 6 and under, undergoes autocatalytic cleavage in vitro in the N-terminal region of the fourth VWD domain. It is likely that this also occurs in vivo and is triggered by the low pH of the late secretory pathway. As to expression, colon, small intestine, colonic tumors, bronchus, cervix and gall bladder.

Its subcellular location is the secreted. Coats the epithelia of the intestines and other mucus membrane-containing organs to provide a protective, lubricating barrier against particles and infectious agents at mucosal surfaces. Major constituent of the colon mucus, which is mainly formed by large polymeric networks of MUC2 secreted by goblet cells that cover the exposed surfaces of intestine. MUC2 networks form hydrogels that guard the underlying epithelium from pathogens and other hazardous matter entering from the outside world, while permitting nutrient absorption and gas exchange. Acts as a divalent copper chaperone that protects intestinal cells from copper toxicity and facilitates nutritional copper unptake into cells. Binds both Cu(2+) and its reduced form, Cu(1+), at two juxtaposed binding sites: Cu(2+), once reduced to Cu(1+) by vitamin C (ascorbate) or other dietary antioxidants, transits to the other binding site. MUC2-bound Cu(1+) is protected from oxidation in aerobic environments, and can be released for nutritional delivery to cells. Mucin gels store antimicrobial molecules that participate in innate immunity. Mucin glycoproteins also house and feed the microbiome, lubricate tissue surfaces, and may facilitate the removal of contaminants and waste products from the body. Goblet cells synthesize two forms of MUC2 mucin that differ in branched chain O-glycosylation and the site of production in the colon: a (1) 'thick' mucus that wraps the microbiota to form fecal pellets is produced in the proximal, ascending colon. 'Thick' mucus transits along the descending colon and is lubricated by a (2) 'thin' MUC2 mucus produced in the distal colon which adheres to the 'thick' mucus. The sequence is that of Mucin-2 from Homo sapiens (Human).